The following is a 226-amino-acid chain: ATP synthase F(0) complex subunit a (226 aa).

The next 6 membrane-spanning stretches (helical) occupy residues 6 to 26 (FASFAAPTILGLPAAVLIILF), 68 to 88 (WSLMLVSLIIFIATTNLLGLL), 97 to 117 (QLSMNLAMAIPLWAGTVVMGF), 138 to 158 (IPMLIIIETISLFIQPMALAV), 164 to 184 (ITAGHLLMHLIGSATLALSTI), and 189 to 209 (TLIIFTILILLTVLEIAVALI).

The protein belongs to the ATPase A chain family. Component of the ATP synthase complex composed at least of ATP5F1A/subunit alpha, ATP5F1B/subunit beta, ATP5MC1/subunit c (homooctomer), MT-ATP6/subunit a, MT-ATP8/subunit 8, ATP5ME/subunit e, ATP5MF/subunit f, ATP5MG/subunit g, ATP5MK/subunit k, ATP5MJ/subunit j, ATP5F1C/subunit gamma, ATP5F1D/subunit delta, ATP5F1E/subunit epsilon, ATP5PF/subunit F6, ATP5PB/subunit b, ATP5PD/subunit d, ATP5PO/subunit OSCP. ATP synthase complex consists of a soluble F(1) head domain (subunits alpha(3) and beta(3)) - the catalytic core - and a membrane F(0) domain - the membrane proton channel (subunits c, a, 8, e, f, g, k and j). These two domains are linked by a central stalk (subunits gamma, delta, and epsilon) rotating inside the F1 region and a stationary peripheral stalk (subunits F6, b, d, and OSCP). Interacts with DNAJC30; interaction is direct.

It localises to the mitochondrion inner membrane. The catalysed reaction is H(+)(in) = H(+)(out). In terms of biological role, subunit a, of the mitochondrial membrane ATP synthase complex (F(1)F(0) ATP synthase or Complex V) that produces ATP from ADP in the presence of a proton gradient across the membrane which is generated by electron transport complexes of the respiratory chain. ATP synthase complex consist of a soluble F(1) head domain - the catalytic core - and a membrane F(1) domain - the membrane proton channel. These two domains are linked by a central stalk rotating inside the F(1) region and a stationary peripheral stalk. During catalysis, ATP synthesis in the catalytic domain of F(1) is coupled via a rotary mechanism of the central stalk subunits to proton translocation. With the subunit c (ATP5MC1), forms the proton-conducting channel in the F(0) domain, that contains two crucial half-channels (inlet and outlet) that facilitate proton movement from the mitochondrial intermembrane space (IMS) into the matrix. Protons are taken up via the inlet half-channel and released through the outlet half-channel, following a Grotthuss mechanism. This chain is ATP synthase F(0) complex subunit a, found in Pan paniscus (Pygmy chimpanzee).